A 427-amino-acid polypeptide reads, in one-letter code: Enolase (427 aa).

Gln162 serves as a coordination point for (2R)-2-phosphoglycerate. Glu204 (proton donor) is an active-site residue. Mg(2+) contacts are provided by Asp241, Glu283, and Asp310. Residues Lys335, Arg364, Ser365, and Lys386 each contribute to the (2R)-2-phosphoglycerate site. Residue Lys335 is the Proton acceptor of the active site.

It belongs to the enolase family. The cofactor is Mg(2+).

It localises to the cytoplasm. The protein resides in the secreted. It is found in the cell surface. The catalysed reaction is (2R)-2-phosphoglycerate = phosphoenolpyruvate + H2O. It functions in the pathway carbohydrate degradation; glycolysis; pyruvate from D-glyceraldehyde 3-phosphate: step 4/5. Catalyzes the reversible conversion of 2-phosphoglycerate (2-PG) into phosphoenolpyruvate (PEP). It is essential for the degradation of carbohydrates via glycolysis. In Mycolicibacterium smegmatis (strain ATCC 700084 / mc(2)155) (Mycobacterium smegmatis), this protein is Enolase.